The primary structure comprises 218 residues: Ras-related protein R-Ras (218 aa).

Residues 1 to 30 (MSSGAASGTGRGRPRGGGPGPRDPPPGETH) form a disordered region. Positions 7 to 20 (SGTGRGRPRGGGPG) are enriched in gly residues. 36 to 44 (GGGGVGKSA) lines the GTP pocket. The Effector region motif lies at 58–66 (YDPTIEDSY). GTP is bound by residues 83–87 (DTAGQ), 142–145 (NKAD), and 172–174 (SAK). Cysteine 215 is subject to Cysteine methyl ester. The S-geranylgeranyl cysteine moiety is linked to residue cysteine 215. A propeptide spans 216-218 (VLL) (removed in mature form).

The protein belongs to the small GTPase superfamily. Ras family. As to quaternary structure, interacts with PLCE1. Interacts (active GTP-bound form preferentially) with RGS14. Interacts with OSBPL3. Interacts with ZDHHC19. Post-translationally, S-palmitoylated by ZDHHC19, leading to increased association with membranes and with rafts/caveolae as well as enhanced cell viability.

The protein resides in the cell membrane. The catalysed reaction is GTP + H2O = GDP + phosphate + H(+). In terms of biological role, GTP-binding protein with GTPase activity, likely involved in the regulation of MAPK signaling pathway and thereby controlling multiple cellular processes. Regulates the organization of the actin cytoskeleton. With OSPBL3, modulates integrin beta-1 (ITGB1) activity. The sequence is that of Ras-related protein R-Ras (Rras) from Rattus norvegicus (Rat).